A 459-amino-acid chain; its full sequence is Nuclear distribution protein nudF 1 (459 aa).

Positions 9-41 constitute a LisH domain; that stretch reads QAEELHKSIIAYLSANNLSNAASALRGELGLSE. The stretch at 61-88 forms a coiled coil; it reads TSIVRLQKKIMDLEARCGALQTELNNAT. 8 WD repeats span residues 114–155, 157–197, 201–240, 243–282, 288–349, 351–390, 395–440, and 442–459; these read SHRN…TTLK, HTRA…KNIR, GHEH…CVKT, GHSG…NPEA, GHDH…LMTL, GHDN…KCVK, AHGR…PQVQ, and RCVV…IFAN.

This sequence belongs to the WD repeat LIS1/nudF family. Self-associates. Interacts with nudE and dynein.

The protein resides in the cytoplasm. It is found in the cytoskeleton. Its subcellular location is the spindle pole. Positively regulates the activity of the minus-end directed microtubule motor protein dynein. May enhance dynein-mediated microtubule sliding by targeting dynein to the microtubule plus end. Required for nuclear migration during vegetative growth as well as development. Required for retrograde early endosome (EE) transport from the hyphal tip. Required for localization of dynein to the mitotic spindle poles. Recruits additional proteins to the dynein complex at SPBs. This Talaromyces marneffei (strain ATCC 18224 / CBS 334.59 / QM 7333) (Penicillium marneffei) protein is Nuclear distribution protein nudF 1.